Reading from the N-terminus, the 261-residue chain is Cytochrome c oxidase subunit 3 (261 aa).

Topologically, residues 1-15 (MAHQAHSYHMVDPSP) are mitochondrial matrix. The helical transmembrane segment at 16–34 (WPIFGAAAALLTTSGLIMW) threads the bilayer. Residues 35–40 (FHYSST) lie on the Mitochondrial intermembrane side of the membrane. A helical membrane pass occupies residues 41 to 66 (TLLTMGLLSMLLVMLQWWRDVVREST). The Mitochondrial matrix portion of the chain corresponds to 67–72 (FQGHHT). The helical transmembrane segment at 73 to 105 (PTVQKGLRYGMILFITSEAFFFLGFFWAFFHSS) threads the bilayer. Residues 106–128 (LAPTPELGGQWPPTGVKPLNPLE) lie on the Mitochondrial intermembrane side of the membrane. A helical transmembrane segment spans residues 129–152 (VPLLNTAILLASGVTVTWAHHSIT). Over 153–155 (EGN) the chain is Mitochondrial matrix. Residues 156–183 (RKQAIHALTLTILLGFYFTALQAMEYHE) form a helical membrane-spanning segment. Topologically, residues 184–190 (ASFSIAD) are mitochondrial intermembrane. Residues 191-223 (SVYGSTFFVATGFHGLHVIIGSSFLTVCLLRLI) traverse the membrane as a helical segment. At 224–232 (KFHFTPNHH) the chain is on the mitochondrial matrix side. The helical transmembrane segment at 233-256 (FGFEAAAWYWHFVDIIWLFLYMSM) threads the bilayer. The Mitochondrial intermembrane portion of the chain corresponds to 257–261 (YWWGS).

It belongs to the cytochrome c oxidase subunit 3 family. Component of the cytochrome c oxidase (complex IV, CIV), a multisubunit enzyme composed of 14 subunits. The complex is composed of a catalytic core of 3 subunits MT-CO1, MT-CO2 and MT-CO3, encoded in the mitochondrial DNA, and 11 supernumerary subunits COX4I, COX5A, COX5B, COX6A, COX6B, COX6C, COX7A, COX7B, COX7C, COX8 and NDUFA4, which are encoded in the nuclear genome. The complex exists as a monomer or a dimer and forms supercomplexes (SCs) in the inner mitochondrial membrane with NADH-ubiquinone oxidoreductase (complex I, CI) and ubiquinol-cytochrome c oxidoreductase (cytochrome b-c1 complex, complex III, CIII), resulting in different assemblies (supercomplex SCI(1)III(2)IV(1) and megacomplex MCI(2)III(2)IV(2)).

It localises to the mitochondrion inner membrane. The catalysed reaction is 4 Fe(II)-[cytochrome c] + O2 + 8 H(+)(in) = 4 Fe(III)-[cytochrome c] + 2 H2O + 4 H(+)(out). Functionally, component of the cytochrome c oxidase, the last enzyme in the mitochondrial electron transport chain which drives oxidative phosphorylation. The respiratory chain contains 3 multisubunit complexes succinate dehydrogenase (complex II, CII), ubiquinol-cytochrome c oxidoreductase (cytochrome b-c1 complex, complex III, CIII) and cytochrome c oxidase (complex IV, CIV), that cooperate to transfer electrons derived from NADH and succinate to molecular oxygen, creating an electrochemical gradient over the inner membrane that drives transmembrane transport and the ATP synthase. Cytochrome c oxidase is the component of the respiratory chain that catalyzes the reduction of oxygen to water. Electrons originating from reduced cytochrome c in the intermembrane space (IMS) are transferred via the dinuclear copper A center (CU(A)) of subunit 2 and heme A of subunit 1 to the active site in subunit 1, a binuclear center (BNC) formed by heme A3 and copper B (CU(B)). The BNC reduces molecular oxygen to 2 water molecules using 4 electrons from cytochrome c in the IMS and 4 protons from the mitochondrial matrix. The polypeptide is Cytochrome c oxidase subunit 3 (MT-CO3) (Gallus gallus (Chicken)).